A 592-amino-acid polypeptide reads, in one-letter code: Frizzled-1 (592 aa).

The interval 1-26 (MAERRGPAGGGSGEVGGGRRAGGDRC) is disordered. An N-terminal signal peptide occupies residues 1 to 48 (MAERRGPAGGGSGEVGGGRRAGGDRCPRRPPALPLLLLLWAAALPAGG). Residues 7–20 (PAGGGSGEVGGGRR) show a composition bias toward gly residues. The Extracellular segment spans residues 49–271 (QPAAQPAALS…PEELRFSRTW (223 aa)). Residues 65–184 (PDHGYCQPIS…HGAGELCVGQ (120 aa)) form the FZ domain. 5 disulfide bridges follow: C70–C131, C78–C124, C115–C152, C141–C181, and C145–C169. N84 is a glycosylation site (N-linked (GlcNAc...) asparagine). N185 is a glycosylation site (N-linked (GlcNAc...) asparagine). The tract at residues 185–219 (NASERGTPTPALRPESWTSNPHRGGGAGGSGPGEA) is disordered. Over residues 207-218 (RGGGAGGSGPGE) the composition is skewed to gly residues. The chain crosses the membrane as a helical span at residues 272–292 (IGIWSVLCCASTLFTVLTYLV). Residues 293–303 (DMKRFSYPERP) are Cytoplasmic-facing. A helical membrane pass occupies residues 304-324 (IIFLSGCYTAVAVAYIAGFLL). Residues 325–351 (EERVVCNERFAEDGSRTVAQGTKREGC) are Extracellular-facing. The helical transmembrane segment at 352–372 (TILFMMLYFFGMASSIWWVIL) threads the bilayer. At 373–394 (SLTWFLAAGMKWGHEAIEANSQ) the chain is on the cytoplasmic side. The helical transmembrane segment at 395 to 415 (YFHLAAWAVPAIKTITILALG) threads the bilayer. At 416–438 (QVDGDVLSGVCFVGINNVDALRG) the chain is on the extracellular side. A helical transmembrane segment spans residues 439-459 (FVLAPLFVYLFIGTSFLLAGF). Residues 460–485 (VSLFRIRTIMKHDGTKTEKLEKLMVR) are Cytoplasmic-facing. The helical transmembrane segment at 486–506 (IGIFSVLYTVPATIVIACYFY) threads the bilayer. Topologically, residues 507 to 546 (EQAFREQWERSWVTQSCKSYAIPCPNNHSSHHPPMSPDFT) are extracellular. N533 carries N-linked (GlcNAc...) asparagine glycosylation. The helical transmembrane segment at 547–567 (VFMIKYLMTLIVGITSGFWIW) threads the bilayer. Over 568–592 (SGKTLNSWRKFYTRLTNSKQGETTV) the chain is Cytoplasmic. The Lys-Thr-X-X-X-Trp motif, mediates interaction with the PDZ domain of Dvl family members motif lies at 570-575 (KTLNSW). The PDZ-binding signature appears at 590 to 592 (TTV).

It belongs to the G-protein coupled receptor Fz/Smo family. Expressed in the lens, otic placode (medial wall of the vesicle) and in epibranchial placode. Also expressed in the developing somites (dermomyotome).

The protein resides in the cell membrane. Functionally, receptor for Wnt proteins. Functions in the canonical Wnt/beta-catenin signaling pathway. The canonical Wnt/beta-catenin signaling pathway leads to the activation of disheveled proteins, inhibition of GSK-3 kinase, nuclear accumulation of beta-catenin and activation of Wnt target genes. A second signaling pathway involving PKC and calcium fluxes has been seen for some family members, but it is not yet clear if it represents a distinct pathway or if it can be integrated in the canonical pathway, as PKC seems to be required for Wnt-mediated inactivation of GSK-3 kinase. Both pathways seem to involve interactions with G-proteins. May be involved in transduction and intercellular transmission of polarity information during tissue morphogenesis and/or in differentiated tissues. This Gallus gallus (Chicken) protein is Frizzled-1 (FZD1).